We begin with the raw amino-acid sequence, 315 residues long: DNA-directed RNA polymerase subunit alpha (315 aa).

The alpha N-terminal domain (alpha-NTD) stretch occupies residues 1–227; the sequence is MTQFQIECVE…NLFNPFKKIN (227 aa). The tract at residues 239 to 315 is alpha C-terminal domain (alpha-CTD); it reads EDKISQIPIE…PKRKTNKKEN (77 aa).

Belongs to the RNA polymerase alpha chain family. As to quaternary structure, in plastids the minimal PEP RNA polymerase catalytic core is composed of four subunits: alpha, beta, beta', and beta''. When a (nuclear-encoded) sigma factor is associated with the core the holoenzyme is formed, which can initiate transcription.

It localises to the plastid. The protein localises to the cyanelle. The enzyme catalyses RNA(n) + a ribonucleoside 5'-triphosphate = RNA(n+1) + diphosphate. In terms of biological role, DNA-dependent RNA polymerase catalyzes the transcription of DNA into RNA using the four ribonucleoside triphosphates as substrates. The sequence is that of DNA-directed RNA polymerase subunit alpha from Cyanophora paradoxa.